Here is a 57-residue protein sequence, read N- to C-terminus: Large ribosomal subunit protein bL32c (57 aa).

Belongs to the bacterial ribosomal protein bL32 family.

It localises to the plastid. Its subcellular location is the chloroplast. The protein is Large ribosomal subunit protein bL32c of Drimys granadensis.